The following is a 311-amino-acid chain: Ribonuclease Z (311 aa).

The Zn(2+) site is built by histidine 61, histidine 63, aspartate 65, histidine 66, histidine 148, aspartate 216, and histidine 275. Residue aspartate 65 is the Proton acceptor of the active site.

It belongs to the RNase Z family. As to quaternary structure, homodimer. It depends on Zn(2+) as a cofactor.

It catalyses the reaction Endonucleolytic cleavage of RNA, removing extra 3' nucleotides from tRNA precursor, generating 3' termini of tRNAs. A 3'-hydroxy group is left at the tRNA terminus and a 5'-phosphoryl group is left at the trailer molecule.. In terms of biological role, zinc phosphodiesterase, which displays some tRNA 3'-processing endonuclease activity. Probably involved in tRNA maturation, by removing a 3'-trailer from precursor tRNA. The protein is Ribonuclease Z of Clostridium novyi (strain NT).